Consider the following 571-residue polypeptide: Proline--tRNA ligase (571 aa).

It belongs to the class-II aminoacyl-tRNA synthetase family. ProS type 1 subfamily. As to quaternary structure, homodimer.

It is found in the cytoplasm. It carries out the reaction tRNA(Pro) + L-proline + ATP = L-prolyl-tRNA(Pro) + AMP + diphosphate. In terms of biological role, catalyzes the attachment of proline to tRNA(Pro) in a two-step reaction: proline is first activated by ATP to form Pro-AMP and then transferred to the acceptor end of tRNA(Pro). As ProRS can inadvertently accommodate and process non-cognate amino acids such as alanine and cysteine, to avoid such errors it has two additional distinct editing activities against alanine. One activity is designated as 'pretransfer' editing and involves the tRNA(Pro)-independent hydrolysis of activated Ala-AMP. The other activity is designated 'posttransfer' editing and involves deacylation of mischarged Ala-tRNA(Pro). The misacylated Cys-tRNA(Pro) is not edited by ProRS. The chain is Proline--tRNA ligase from Thermodesulfovibrio yellowstonii (strain ATCC 51303 / DSM 11347 / YP87).